Here is a 1104-residue protein sequence, read N- to C-terminus: Extended synaptotagmin-1 (1104 aa).

Met-1 carries the post-translational modification N-acetylmethionine. Topologically, residues 1–38 (MERSPGEGPSPSPMDQPSAPSDPTDQPPAAHAKPDPGS) are cytoplasmic. The disordered stretch occupies residues 1–48 (MERSPGEGPSPSPMDQPSAPSDPTDQPPAAHAKPDPGSGGQPAGPGAA). The span at 37 to 47 (GSGGQPAGPGA) shows a compositional bias: gly residues. A helical transmembrane segment spans residues 39–59 (GGQPAGPGAAGEALAVLTSFG). The Lumenal segment spans residues 60-62 (RRL). The chain crosses the membrane as a helical span at residues 63–83 (LVLIPVYLAGAVGLSVGFVLF). The Cytoplasmic portion of the chain corresponds to 84 to 1104 (GLALYLGWRR…LMDNKDKGSS (1021 aa)). Residues 91–116 (WRRVRDEKERSLRAARQLLDDEEQLT) are a coiled coil. An SMP-LTD domain is found at 135–313 (DVEKAEWLNK…LPNRLLVPLV (179 aa)). 4 C2 domains span residues 312-433 (LVPD…DDWF), 460-580 (QVLQ…QLSS), 627-751 (SVDA…DEWL), and 777-899 (LEEV…TLSS). Ser-324 carries the phosphoserine; by CDK5 modification. Ca(2+) contacts are provided by Lys-344, Asp-345, Asp-357, Asp-404, Asp-406, Asp-408, Asp-410, and Asp-411. Residues 617–641 (VDSENPQRGSSVDAPPRPCHTTPDS) are disordered. Lys-817 carries the N6-acetyllysine modification. Phosphoserine is present on residues Ser-820 and Ser-941. The segment at 924 to 950 (SHSYSHSSSSLSEEPELSGGPPHITSS) is disordered. The span at 925 to 946 (HSYSHSSSSLSEEPELSGGPPH) shows a compositional bias: low complexity. Thr-948 carries the post-translational modification Phosphothreonine. A phosphoserine mark is found at Ser-949 and Ser-963. In terms of domain architecture, C2 5 spans 971-1093 (PLGQVKLTLW…DLSQGVARWY (123 aa)). A Phosphotyrosine modification is found at Tyr-1009. Residues 1018–1025 (KNRGTKRR) are required for phosphatidylinositol 4,5-bisphosphate-dependent location at the cell membrane. Residue Ser-1034 is modified to Phosphoserine.

This sequence belongs to the extended synaptotagmin family. As to quaternary structure, interacts with ESYT2 and ESYT3. Interacts with ADGRD1; inhibiting the G-protein-coupled receptor activity of ADGRD1. Interaction with ADGRD1 is abolished when cytosolic calcium increases, relieving ADGRD1 G-protein-coupled receptor activity. Interacts (phosphorylated form) with SLC2A4. In terms of processing, phosphorylated on Ser residues in insulin-treated adipocytes (in vitro); this promotes interaction with SLC2A4. In terms of tissue distribution, widely expressed.

Its subcellular location is the endoplasmic reticulum membrane. It localises to the cell membrane. Its function is as follows. Binds calcium (via the C2 domains) and translocates to sites of contact between the endoplasmic reticulum and the cell membrane in response to increased cytosolic calcium levels. Helps tether the endoplasmic reticulum to the cell membrane and promotes the formation of appositions between the endoplasmic reticulum and the cell membrane. Acts as an inhibitor of ADGRD1 G-protein-coupled receptor activity in absence of cytosolic calcium. Binds glycerophospholipids in a barrel-like domain and may play a role in cellular lipid transport. This Homo sapiens (Human) protein is Extended synaptotagmin-1.